A 449-amino-acid chain; its full sequence is Nucleoporin NUP42 (449 aa).

Residues 1–25 form a C3H1-type zinc finger; that stretch reads MAICSFFLQGRCRYGEKCWNEHPRG. Disordered stretches follow at residues 22-84 and 218-237; these read HPRG…GFDN and DMTSGYNGQQKPAFGSSSFP. Composition is skewed to polar residues over residues 47 to 83 and 218 to 227; these read WGSSSQRYVQPSSFSRSTTWVNRDNEKPSSGSHSGFD and DMTSGYNGQQ. 7 FG repeats span residues 231 to 232, 274 to 275, 284 to 285, 305 to 306, 314 to 315, 335 to 336, and 347 to 348; these read FG.

Probable component of the nuclear pore complex (NPC).

It is found in the nucleus. The protein resides in the nuclear pore complex. Its subcellular location is the nucleus membrane. In terms of biological role, required for the export of mRNAs containing poly(A) tails from the nucleus into the cytoplasm. The sequence is that of Nucleoporin NUP42 (nup42) from Xenopus tropicalis (Western clawed frog).